The primary structure comprises 181 residues: Peptide deformylase (181 aa).

The Fe cation site is built by Cys-99 and His-141. Glu-142 is an active-site residue. His-145 is a binding site for Fe cation.

It belongs to the polypeptide deformylase family. The cofactor is Fe(2+).

It catalyses the reaction N-terminal N-formyl-L-methionyl-[peptide] + H2O = N-terminal L-methionyl-[peptide] + formate. Removes the formyl group from the N-terminal Met of newly synthesized proteins. Requires at least a dipeptide for an efficient rate of reaction. N-terminal L-methionine is a prerequisite for activity but the enzyme has broad specificity at other positions. This Chlamydia trachomatis serovar A (strain ATCC VR-571B / DSM 19440 / HAR-13) protein is Peptide deformylase.